Here is a 204-residue protein sequence, read N- to C-terminus: Large ribosomal subunit protein uL4 (204 aa).

The segment at 49 to 90 is disordered; the sequence is KVKGMGEVSGTTKKPYRQKGTGSARQGSLRAPQYRTGGAVHG.

This sequence belongs to the universal ribosomal protein uL4 family. Part of the 50S ribosomal subunit.

Functionally, one of the primary rRNA binding proteins, this protein initially binds near the 5'-end of the 23S rRNA. It is important during the early stages of 50S assembly. It makes multiple contacts with different domains of the 23S rRNA in the assembled 50S subunit and ribosome. Forms part of the polypeptide exit tunnel. This Gluconacetobacter diazotrophicus (strain ATCC 49037 / DSM 5601 / CCUG 37298 / CIP 103539 / LMG 7603 / PAl5) protein is Large ribosomal subunit protein uL4.